The primary structure comprises 189 residues: 3-hydroxyanthranilate 3,4-dioxygenase (189 aa).

Arginine 46 serves as a coordination point for O2. Residues histidine 50, glutamate 56, and histidine 94 each contribute to the Fe cation site. Glutamate 56 lines the substrate pocket. Substrate contacts are provided by arginine 98 and glutamate 109. The Fe cation site is built by cysteine 124, cysteine 127, cysteine 161, and cysteine 164.

The protein belongs to the 3-HAO family. In terms of assembly, homodimer. It depends on Fe(2+) as a cofactor.

The catalysed reaction is 3-hydroxyanthranilate + O2 = (2Z,4Z)-2-amino-3-carboxymuconate 6-semialdehyde. The protein operates within cofactor biosynthesis; NAD(+) biosynthesis; quinolinate from L-kynurenine: step 3/3. In terms of biological role, catalyzes the oxidative ring opening of 3-hydroxyanthranilate to 2-amino-3-carboxymuconate semialdehyde, which spontaneously cyclizes to quinolinate. The polypeptide is 3-hydroxyanthranilate 3,4-dioxygenase (Shewanella woodyi (strain ATCC 51908 / MS32)).